The primary structure comprises 254 residues: Triosephosphate isomerase (254 aa).

12–14 (NWK) lines the substrate pocket. Catalysis depends on histidine 99, which acts as the Electrophile. Glutamate 169 acts as the Proton acceptor in catalysis. Residues glycine 175, serine 214, and 235–236 (GG) each bind substrate.

Belongs to the triosephosphate isomerase family. In terms of assembly, homodimer.

The protein resides in the cytoplasm. The catalysed reaction is D-glyceraldehyde 3-phosphate = dihydroxyacetone phosphate. The protein operates within carbohydrate biosynthesis; gluconeogenesis. It functions in the pathway carbohydrate degradation; glycolysis; D-glyceraldehyde 3-phosphate from glycerone phosphate: step 1/1. Involved in the gluconeogenesis. Catalyzes stereospecifically the conversion of dihydroxyacetone phosphate (DHAP) to D-glyceraldehyde-3-phosphate (G3P). The polypeptide is Triosephosphate isomerase (Bartonella henselae (strain ATCC 49882 / DSM 28221 / CCUG 30454 / Houston 1) (Rochalimaea henselae)).